A 94-amino-acid polypeptide reads, in one-letter code: MFQKQQRIGLVIYLYYNRDARKVMKYGDLYYHSRRSRYLVIYINKEDMEEKLKDISRLTFVKEVKVSAFDDIDCDFVGNLHREPLEPQALPEQG.

Belongs to the UPF0298 family.

It is found in the cytoplasm. The polypeptide is UPF0298 protein SEQ_1830 (Streptococcus equi subsp. equi (strain 4047)).